The sequence spans 101 residues: Small ribosomal subunit protein uS14 (101 aa).

Belongs to the universal ribosomal protein uS14 family. In terms of assembly, part of the 30S ribosomal subunit. Contacts proteins S3 and S10.

Its function is as follows. Binds 16S rRNA, required for the assembly of 30S particles and may also be responsible for determining the conformation of the 16S rRNA at the A site. The sequence is that of Small ribosomal subunit protein uS14 from Pseudoalteromonas atlantica (strain T6c / ATCC BAA-1087).